Here is an 872-residue protein sequence, read N- to C-terminus: Alanine--tRNA ligase (872 aa).

His567, His571, Cys669, and His673 together coordinate Zn(2+).

Belongs to the class-II aminoacyl-tRNA synthetase family. It depends on Zn(2+) as a cofactor.

The protein localises to the cytoplasm. It carries out the reaction tRNA(Ala) + L-alanine + ATP = L-alanyl-tRNA(Ala) + AMP + diphosphate. Its function is as follows. Catalyzes the attachment of alanine to tRNA(Ala) in a two-step reaction: alanine is first activated by ATP to form Ala-AMP and then transferred to the acceptor end of tRNA(Ala). Also edits incorrectly charged Ser-tRNA(Ala) and Gly-tRNA(Ala) via its editing domain. This Streptococcus sanguinis (strain SK36) protein is Alanine--tRNA ligase.